We begin with the raw amino-acid sequence, 582 residues long: Arginine--tRNA ligase (582 aa).

Positions 136-146 (ANPTGPMHMGH) match the 'HIGH' region motif.

This sequence belongs to the class-I aminoacyl-tRNA synthetase family. In terms of assembly, monomer.

Its subcellular location is the cytoplasm. The enzyme catalyses tRNA(Arg) + L-arginine + ATP = L-arginyl-tRNA(Arg) + AMP + diphosphate. This Novosphingobium aromaticivorans (strain ATCC 700278 / DSM 12444 / CCUG 56034 / CIP 105152 / NBRC 16084 / F199) protein is Arginine--tRNA ligase.